Consider the following 57-residue polypeptide: Large ribosomal subunit protein bL32 (57 aa).

The protein belongs to the bacterial ribosomal protein bL32 family.

The polypeptide is Large ribosomal subunit protein bL32 (Staphylococcus epidermidis (strain ATCC 35984 / DSM 28319 / BCRC 17069 / CCUG 31568 / BM 3577 / RP62A)).